The following is a 503-amino-acid chain: Protein-cysteine N-palmitoyltransferase HHAT-like protein (503 aa).

8 helical membrane passes run 12–31, 65–87, 100–122, 127–149, 250–272, 287–309, 426–445, and 460–482; these read LGLY…RGLL, WVMW…VLFA, WMYA…LLLL, MVLY…LASL, AGLS…ILTI, LAGL…FGVV, VRAL…NLVS, and ILTG…VQLV.

The protein belongs to the membrane-bound acyltransferase family. HHAT subfamily. Interacts with SHH.

It localises to the endoplasmic reticulum membrane. Functionally, negatively regulates N-terminal palmitoylation of SHH by HHAT/SKN. The polypeptide is Protein-cysteine N-palmitoyltransferase HHAT-like protein (Hhatl) (Mus musculus (Mouse)).